Consider the following 249-residue polypeptide: Small ribosomal subunit protein eS6 (249 aa).

K14 participates in a covalent cross-link: Glycyl lysine isopeptide (Lys-Gly) (interchain with G-Cter in SUMO2). An ADP-ribosyl glutamic acid modification is found at E35. R137 bears the (3R)-3-hydroxyarginine mark. S148 is subject to Phosphoserine. Position 211 is an N6-acetyllysine (K211). Residues 217–229 (MKEAKEKRQEQIA) are compositionally biased toward basic and acidic residues. Positions 217 to 249 (MKEAKEKRQEQIAKRRRLSSLRASTSKSESSQK) are disordered. S235, S236, S240, S242, S244, and S247 each carry phosphoserine. Over residues 236–249 (SLRASTSKSESSQK) the composition is skewed to low complexity.

This sequence belongs to the eukaryotic ribosomal protein eS6 family. As to quaternary structure, component of the small ribosomal subunit. Part of the small subunit (SSU) processome, composed of more than 70 proteins and the RNA chaperone small nucleolar RNA (snoRNA) U3. Ribosomal protein S6 is the major substrate of protein kinases in eukaryote ribosomes. The phosphorylation is stimulated by growth factors, tumor promoting agents, and mitogens. It is dephosphorylated at growth arrest. Phosphorylated at Ser-235 and Ser-236 by RPS6KA1 and RPS6KA3; phosphorylation at these sites facilitates the assembly of the pre-initiation complex. In terms of processing, specifically hydroxylated (with R stereochemistry) at C-3 of Arg-137 by KDM8. Post-translationally, mono-ADP-ribosylation at Glu-35 by PARP16 inhibits polysome assembly and mRNA loading, thereby inhibiting protein translation.

Its subcellular location is the cytoplasm. The protein localises to the nucleus. It localises to the nucleolus. Component of the 40S small ribosomal subunit. Plays an important role in controlling cell growth and proliferation through the selective translation of particular classes of mRNA. Part of the small subunit (SSU) processome, first precursor of the small eukaryotic ribosomal subunit. During the assembly of the SSU processome in the nucleolus, many ribosome biogenesis factors, an RNA chaperone and ribosomal proteins associate with the nascent pre-rRNA and work in concert to generate RNA folding, modifications, rearrangements and cleavage as well as targeted degradation of pre-ribosomal RNA by the RNA exosome. This chain is Small ribosomal subunit protein eS6 (RPS6), found in Oryctolagus cuniculus (Rabbit).